A 432-amino-acid chain; its full sequence is Benzoyl-CoA reductase subunit B (432 aa).

This sequence belongs to the FldB/FldC dehydratase alpha/beta subunit family. As to quaternary structure, heterotetramer composed of A, B, C, and D subunits. Iron-sulfur cluster serves as cofactor. The cofactor is an oxidized flavin.

The enzyme catalyses cyclohexa-1,5-diene-1-carbonyl-CoA + oxidized 2[4Fe-4S]-[ferredoxin] + 2 ADP + 2 phosphate = reduced 2[4Fe-4S]-[ferredoxin] + benzoyl-CoA + 2 ATP + 2 H2O. The catalysed reaction is 3-hydroxybenzoyl-CoA + AH2 + 2 ATP + 2 H2O = 3-hydroxycyclohexa-1,5-diene-1-carbonyl-CoA + A + 2 ADP + 2 phosphate + 2 H(+). Catalyzes the anaerobic reduction of benzoyl-CoA and 3-hydroxybenzoyl-CoA to form cyclohexa-1,5-diene-1-carbonyl-CoA and 3-hydroxycyclohexa-1,5-diene-1-carbonyl-CoA, respectively. The enzyme also reduces other benzoyl-CoA analogs with small substituents at the aromatic ring. In Thauera aromatica, this protein is Benzoyl-CoA reductase subunit B (bcrB).